Here is a 223-residue protein sequence, read N- to C-terminus: Sigma non-opioid intracellular receptor 1 (223 aa).

The Lumenal segment spans residues 1–9 (MQWAAGRRW). The interval 2–8 (QWAAGRR) is targeting to endoplasmic reticulum-associated lipid droplets. A helical transmembrane segment spans residues 10-30 (AWITLFLTIVAVLIQAVWLWL). Topologically, residues 31 to 223 (GTQSFVFQRE…LTTYLFGQDS (193 aa)) are cytoplasmic. The segment at 99 to 106 (SLSEYVLL) is important for ligand-binding. Residues 177–223 (VIPSTLAFALSDTIFSTQDFLTLFYTLRAYARGLRLELTTYLFGQDS) are C-terminal hydrophobic region.

This sequence belongs to the ERG2 family. As to quaternary structure, homotrimer. Forms a ternary complex with ANK2 and ITPR3. The complex is disrupted by agonists. Interacts with KCNA4. Interacts with KCNA2; cocaine consumption leads to increased interaction. Interacts with RNF112 in an oxidative stress-regulated manner.

It is found in the nucleus inner membrane. The protein localises to the nucleus outer membrane. The protein resides in the nucleus envelope. Its subcellular location is the cytoplasmic vesicle. It localises to the endoplasmic reticulum membrane. It is found in the membrane. The protein localises to the lipid droplet. The protein resides in the cell junction. Its subcellular location is the cell membrane. It localises to the cell projection. It is found in the growth cone. The protein localises to the postsynaptic density membrane. Its function is as follows. Functions in lipid transport from the endoplasmic reticulum and is involved in a wide array of cellular functions probably through regulation of the biogenesis of lipid microdomains at the plasma membrane. Involved in the regulation of different receptors it plays a role in BDNF signaling and EGF signaling. Also regulates ion channels like the potassium channel and could modulate neurotransmitter release. Plays a role in calcium signaling through modulation together with ANK2 of the ITP3R-dependent calcium efflux at the endoplasmic reticulum. Plays a role in several other cell functions including proliferation, survival and death. Originally identified for its ability to bind various psychoactive drugs it is involved in learning processes, memory and mood alteration. Necessary for proper mitochondrial axonal transport in motor neurons, in particular the retrograde movement of mitochondria. Plays a role in protecting cells against oxidative stress-induced cell death via its interaction with RNF112. The protein is Sigma non-opioid intracellular receptor 1 (SIGMAR1) of Trichosurus vulpecula (Brush-tailed possum).